The sequence spans 20 residues: Antifreeze protein (20 aa).

N-glycosylated and O-glycosylated.

It localises to the secreted. The protein localises to the extracellular space. In terms of biological role, antifreeze proteins bind to the surface of ice crystals and inhibit the growth of these crystals, this inhibition causes thermal hysteresis. Causes the shape of ice crystals to change from hexagonal to a bipyramidal shape with rugged facets. Inhibits recrystallization of ice crystals. This is Antifreeze protein from Antarctomyces psychrotrophicus.